The chain runs to 224 residues: Non-structural protein 3 (224 aa).

The 91-residue stretch at 34-124 (NVVPIRQASN…RYKNALFIIF (91 aa)) folds into the CoV 3a-like viroporin TM domain. Transmembrane regions (helical) follow at residues 40–60 (QASN…FALF), 69–88 (YIML…LLYY), and 95–111 (ATII…LVCF). One can recognise a CoV 3a-like viroporin CD domain in the interval 128-203 (TLSFLNGKAA…KLYVFSQHQI (76 aa)).

It is found in the host membrane. In Sus scrofa (Pig), this protein is Non-structural protein 3.